We begin with the raw amino-acid sequence, 267 residues long: L-aspartate dehydrogenase (267 aa).

Alanine 124 and asparagine 190 together coordinate NAD(+). The active site involves histidine 218.

Belongs to the L-aspartate dehydrogenase family.

The catalysed reaction is L-aspartate + NADP(+) + H2O = oxaloacetate + NH4(+) + NADPH + H(+). It carries out the reaction L-aspartate + NAD(+) + H2O = oxaloacetate + NH4(+) + NADH + H(+). It functions in the pathway cofactor biosynthesis; NAD(+) biosynthesis; iminoaspartate from L-aspartate (dehydrogenase route): step 1/1. In terms of biological role, specifically catalyzes the NAD or NADP-dependent dehydrogenation of L-aspartate to iminoaspartate. The polypeptide is L-aspartate dehydrogenase (Methanococcus maripaludis (strain DSM 14266 / JCM 13030 / NBRC 101832 / S2 / LL)).